A 953-amino-acid polypeptide reads, in one-letter code: Protein ENHANCER OF LHP1 1 (953 aa).

WD repeat units follow at residues 15–55 (GGSA…TLPP), 60–99 (HHQD…FQTN), 102–143 (RFTL…RVLK), 144–183 (GHKG…VSFT), 192–232 (GFNT…KLFA), 236–275 (DHLE…DIDR), and 277–316 (KFEE…SMLS). Disordered regions lie at residues 347-370 (SESL…RKRL), 385-419 (EELN…GAFK), and 851-877 (ESKV…SATK). Positions 349–359 (SLDDAMGDSDD) are enriched in acidic residues. A compositionally biased stretch (polar residues) spans 853-877 (KVQNPPASIQTSENTEAVMKSSATK). Positions 900 to 907 (TKKDKSDD) match the Nuclear localization signal motif. The segment at 919–953 (KNPVNNVNKEDKGQEKEVNQGEARRSSNPFLKSTV) is disordered. The segment covering 926-943 (NKEDKGQEKEVNQGEARR) has biased composition (basic and acidic residues). The span at 944–953 (SSNPFLKSTV) shows a compositional bias: polar residues.

Interacts with EZA1/SWN, LHP1, SLD5 and CLF in the nucleus. In terms of tissue distribution, expressed in root meristematic zones, initiating lateral roots, young leaves and the shoot apex.

It localises to the nucleus. In terms of biological role, participates in maintaining the H3K27me3 mark at target genes by interacting with LHP1-PRC2 complexes during replication, thus contributing to H3K27me3 inheritance. This Arabidopsis thaliana (Mouse-ear cress) protein is Protein ENHANCER OF LHP1 1.